Consider the following 825-residue polypeptide: Cytosolic phospholipase A2 delta (825 aa).

The region spanning 14 to 133 (SPERLHGHPY…LPGQLLQKTF (120 aa)) is the C2 domain. Positions 47, 53, 103, 105, and 111 each coordinate Ca(2+). A PLA2c domain is found at 281–825 (DCCPKELSVR…SETRPLGVKT (545 aa)). 339–340 (GG) is a binding site for substrate. The Nucleophile role is filled by Ser-370. Asp-654 acts as the Proton acceptor in catalysis.

Requires Ca(2+) as cofactor. Weakly or not expressed in most tissues. Detected in placenta of 17.5 dpc embryos.

It is found in the cytoplasm. The protein resides in the cytosol. The protein localises to the membrane. It carries out the reaction a 1,2-diacyl-sn-glycero-3-phosphocholine + H2O = a 1-acyl-sn-glycero-3-phosphocholine + a fatty acid + H(+). The enzyme catalyses 1-hexadecanoyl-2-(5Z,8Z,11Z,14Z-eicosatetraenoyl)-sn-glycero-3-phosphocholine + H2O = 1-hexadecanoyl-sn-glycero-3-phosphocholine + (5Z,8Z,11Z,14Z)-eicosatetraenoate + H(+). It catalyses the reaction 1-hexadecanoyl-2-(9Z,12Z-octadecadienoyl)-sn-glycero-3-phosphocholine + H2O = (9Z,12Z)-octadecadienoate + 1-hexadecanoyl-sn-glycero-3-phosphocholine + H(+). The catalysed reaction is 1-hexadecanoyl-2-(9Z-octadecenoyl)-sn-glycero-3-phosphocholine + H2O = 1-hexadecanoyl-sn-glycero-3-phosphocholine + (9Z)-octadecenoate + H(+). It carries out the reaction 1-hexadecanoyl-2-(5Z,8Z,11Z,14Z-eicosatetraenoyl)-sn-glycero-3-phosphoethanolamine + H2O = 1-hexadecanoyl-sn-glycero-3-phosphoethanolamine + (5Z,8Z,11Z,14Z)-eicosatetraenoate + H(+). The enzyme catalyses 1-hexadecanoyl-2-(9Z,12Z-octadecadienoyl)-sn-glycero-3-phosphoethanolamine + H2O = 1-hexadecanoyl-sn-glycero-3-phosphoethanolamine + (9Z,12Z)-octadecadienoate + H(+). It catalyses the reaction 1-hexadecanoyl-sn-glycero-3-phosphocholine + H2O = sn-glycerol 3-phosphocholine + hexadecanoate + H(+). It functions in the pathway lipid metabolism; fatty acid metabolism. Stimulated by cytosolic Ca(2+). Calcium-dependent phospholipase A2 that selectively hydrolyzes glycerophospholipids in the sn-2 position. Compared to its human ortholog, may have no preference for the fatty acid found at the sn-2 position. In Mus musculus (Mouse), this protein is Cytosolic phospholipase A2 delta.